A 237-amino-acid chain; its full sequence is RNA polymerase sigma-28 factor (237 aa).

The propeptide occupies 1-19; sequence MSLFAAIGYMVREVFVFVS. The short motif at 77-90 is the Polymerase core binding element; the sequence is DLISIGTIGLIKAI. The segment at residues 197–206 is a DNA-binding region (H-T-H motif); the sequence is QREIAKALGI.

The protein belongs to the sigma-70 factor family. Proteolytically cleaved in the N-terminus probably by a SpoIIGA homolog to yield the active peptide.

Sigma factors are initiation factors that promote the attachment of RNA polymerase to specific initiation sites and are then released. This sigma factor directs the transcription of crystal protein genes, a sporulation-regulated event. The sequence is that of RNA polymerase sigma-28 factor (sigK) from Bacillus thuringiensis subsp. kurstaki.